The primary structure comprises 489 residues: Ulvan Lyase-PL25 (489 aa).

A signal peptide spans 1–31; the sequence is MNLNKTLRKNSPSGYKALLTFSIICGLMATG. The N-palmitoyl cysteine moiety is linked to residue Cys32. Cys32 carries the S-diacylglycerol cysteine lipid modification. Asn60 and Asn122 together coordinate substrate. His123 serves as the catalytic Proton donor. Lys125 and His143 together coordinate substrate. Tyr188 acts as the Proton acceptor in catalysis. Substrate-binding residues include Arg204, His208, and Tyr246. His208 is a binding site for Zn(2+). Zn(2+) contacts are provided by His264, Cys266, and His278. His278 lines the substrate pocket.

It belongs to the polysaccharide lyase 25 family.

Its subcellular location is the cell membrane. Ulvan lyase involved in ulvan degradation. Ulvan is the main polysaccharide component of the Ulvales (green seaweed) cell wall. It is composed of disaccharide building blocks comprising 3-sulfated rhamnose (Rha3S) linked to D-glucuronic acid (GlcA), L-iduronic acid (IduA), or D-xylose (Xyl). Ulvan lyase catalyzes the endolytic cleavage of the glycosidic bond between Rha3S and the uronic acids GlcA or IduA, producing oligosaccharides that have unsaturated 4-deoxy-L-threo-hex-4-enopyranosiduronic acid (deltaUA) at the non-reducing end. This results eventually in the degradation of the ulvan polysaccharide into deltaUA-Rha3S disaccharides and deltaUA-Rha3S-Xyl-Rha3S tetrasaccharides. This Pseudoalteromonas sp. (strain PLSV) protein is Ulvan Lyase-PL25.